The following is an 85-amino-acid chain: Protein BTH_I0359 (85 aa).

The sequence is that of Protein BTH_I0359 from Burkholderia thailandensis (strain ATCC 700388 / DSM 13276 / CCUG 48851 / CIP 106301 / E264).